A 65-amino-acid chain; its full sequence is MAKVRFKYKGEEKEVDTSKIKKVWRVGKMVSFTYDDNGKTGRGAVSEKDAPKELMDMLARAEKKK.

Lys7 bears the N6-methyllysine mark. Residues Lys63 and Lys64 each carry the N6-methyllysine; partial modification.

The protein belongs to the 7 kDa DNA-binding/endoribonuclease P2 family. As to quaternary structure, monomer. Post-translationally, lys-63 was found to be 25% monomethylated and Lys-64 was found to be 36% monomethylated.

It localises to the cytoplasm. Functionally, can constrain negative DNA supercoils. May be involved in maintaining the integrity of the genome at high temperature. This is DNA-binding protein 7e from Sulfolobus acidocaldarius (strain ATCC 33909 / DSM 639 / JCM 8929 / NBRC 15157 / NCIMB 11770).